Here is a 668-residue protein sequence, read N- to C-terminus: GTP-binding protein 1 (668 aa).

Residues 1–32 (MAAERSRSPVDSPVPASMFAPEPSSPGAARAA) are disordered. Phosphoserine occurs at positions 6, 8, 12, 24, 25, 44, 47, and 69. Residues 158-389 (FLEVRVAVVG…LNLLSPRTSY (232 aa)) enclose the tr-type G domain. Residues 167–174 (GNVDAGKS) form a G1 region. 167–174 (GNVDAGKS) contributes to the GTP binding site. Positions 206 to 210 (GRTSS) are G2. The G3 stretch occupies residues 252–255 (DLAG). Residues 252 to 256 (DLAGH) and 308 to 311 (TKID) contribute to the GTP site. The interval 308–311 (TKID) is G4. Positions 366 to 368 (SNV) are G5. Residues 573 to 595 (LLQTTNNSPMNSKPQQIKMQSTK) are compositionally biased toward polar residues. Residues 573-668 (LLQTTNNSPM…GACVTPASGC (96 aa)) form a disordered region. Phosphoserine is present on Ser-580. Low complexity predominate over residues 609 to 619 (GVPAAGGPPTG). A compositionally biased stretch (polar residues) spans 624–637 (SLGTAQAASTSGLQ). Over residues 646-657 (GRRRGGQRHKVK) the composition is skewed to basic residues.

The protein belongs to the TRAFAC class translation factor GTPase superfamily. Classic translation factor GTPase family. GTPBP1 subfamily. As to quaternary structure, interacts with EXOSC2/RRP4, EXOSC3/RRP40, EXOSC5/RRP46, HNRNPD, HNRNPR and SYNCRIP. Identified in a complex with AANAT mRNA, but does not bind mRNA by itself. Detected in some neurons in the brain cortex. Detected in small arteries, dendritic cells and macrophages in the thymus. Detected in lung bronchi, in bronchial epithelial cells and in bronchial smooth muscle cells. Detected in smooth muscle cells in a broad range of organs (at protein level). Expressed in brain, thymus, lung, and kidney.

It is found in the cytoplasm. Its function is as follows. Promotes degradation of target mRNA species. Plays a role in the regulation of circadian mRNA stability. Binds GTP and has GTPase activity. In Mus musculus (Mouse), this protein is GTP-binding protein 1 (Gtpbp1).